Consider the following 213-residue polypeptide: Phycocyanobilin lyase subunit beta (213 aa).

The protein belongs to the CpcE/RpcE/PecE family. In terms of assembly, cpcE and CpcF associate to form a lyase.

Functionally, required for the chromophorylation of the CpcA gene product. This Thermosynechococcus vestitus (strain NIES-2133 / IAM M-273 / BP-1) protein is Phycocyanobilin lyase subunit beta (cpcF).